Here is a 368-residue protein sequence, read N- to C-terminus: Isocitrate dehydrogenase [NAD] subunit 2, mitochondrial (368 aa).

The N-terminal 14 residues, 1 to 14 (MFRQSIVKQSCRFL), are a transit peptide targeting the mitochondrion. The substrate site is built by arginine 118, arginine 128, arginine 149, and aspartate 236. Aspartate 236, aspartate 262, and aspartate 266 together coordinate Mg(2+).

This sequence belongs to the isocitrate and isopropylmalate dehydrogenases family. Octamer of two non-identical subunits IDH1 and IDH2. It depends on Mg(2+) as a cofactor. Mn(2+) serves as cofactor.

The protein resides in the mitochondrion. The catalysed reaction is D-threo-isocitrate + NAD(+) = 2-oxoglutarate + CO2 + NADH. Performs an essential role in the oxidative function of the citric acid cycle. The chain is Isocitrate dehydrogenase [NAD] subunit 2, mitochondrial (IDH2) from Kluyveromyces lactis (strain ATCC 8585 / CBS 2359 / DSM 70799 / NBRC 1267 / NRRL Y-1140 / WM37) (Yeast).